Consider the following 244-residue polypeptide: 6-carboxyhexanoate--CoA ligase (244 aa).

The protein belongs to the BioW family. As to quaternary structure, homodimer. Mg(2+) is required as a cofactor.

The enzyme catalyses heptanedioate + ATP + CoA = 6-carboxyhexanoyl-CoA + AMP + diphosphate. It functions in the pathway metabolic intermediate metabolism; pimeloyl-CoA biosynthesis; pimeloyl-CoA from pimelate: step 1/1. In terms of biological role, catalyzes the transformation of pimelate into pimeloyl-CoA with concomitant hydrolysis of ATP to AMP. The protein is 6-carboxyhexanoate--CoA ligase of Methanococcus maripaludis (strain DSM 14266 / JCM 13030 / NBRC 101832 / S2 / LL).